The primary structure comprises 410 residues: Sprouty-related, EVH1 domain-containing protein 2 (410 aa).

Positions 5-122 constitute a WH1 domain; sequence THPDDDSYIV…RGVRKAIEDL (118 aa). The disordered stretch occupies residues 127-171; it reads TTSSSTIHNEAELGDDDVFTTATDSSSNSSQKREPNTRTISSPTS. Over residues 146 to 156 the composition is skewed to polar residues; the sequence is TTATDSSSNSS. In terms of domain architecture, KBD spans 197-252; the sequence is SYPQVTFPEDDEEIVRINPREKIWMTGYEDYRHAPVRGKYLDSTEDADSYVRFAKG. 2 positions are modified to phosphotyrosine: Tyr224 and Tyr227. The segment at 274–294 is disordered; the sequence is DPKGNVIKTQPPRAKSRRRKE. Residues 300-408 form the SPR domain; it reads RCVYCRDMFN…CRCCGGKHKA (109 aa).

As to quaternary structure, homodimer and heterodimer. Able to interact with SPRED1 to form heterodimers. Interacts with RAS. May interact with ZDHHC13 (via ANK repeats) and ZDHHC17 (via ANK repeats). Interacts with TESK1. Interacts with NF1. Post-translationally, phosphorylated on serine and threonine residues. Phosphorylated on tyrosine. Phosphorylation of Tyr-224 and Tyr-227 are required for ubiquitination. In terms of processing, ubiquitinated; leading to degradation by the proteasome. In terms of tissue distribution, expressed in the eye, with higher expression in lens epithelium than in lens fiber cells at postnatal day 15.

It localises to the cell membrane. The protein localises to the cytoplasmic vesicle. The protein resides in the secretory vesicle membrane. Its subcellular location is the cytoplasm. Functionally, negatively regulates Ras signaling pathways and downstream activation of MAP kinases. Recruits and translocates NF1 to the cell membrane, thereby enabling NF1-dependent hydrolysis of active GTP-bound Ras to inactive GDP-bound Ras. Inhibits fibroblast growth factor (FGF)-induced retinal lens fiber differentiation, probably by inhibiting FGF-mediated phosphorylation of ERK1/2. Inhibits TGFB-induced epithelial-to-mesenchymal transition in lens epithelial cells. This chain is Sprouty-related, EVH1 domain-containing protein 2 (Spred2), found in Rattus norvegicus (Rat).